Reading from the N-terminus, the 360-residue chain is Peptide chain release factor 1 (360 aa).

Glutamine 235 carries the N5-methylglutamine modification.

It belongs to the prokaryotic/mitochondrial release factor family. Post-translationally, methylated by PrmC. Methylation increases the termination efficiency of RF1.

The protein localises to the cytoplasm. Functionally, peptide chain release factor 1 directs the termination of translation in response to the peptide chain termination codons UAG and UAA. This Burkholderia multivorans (strain ATCC 17616 / 249) protein is Peptide chain release factor 1.